Reading from the N-terminus, the 398-residue chain is Type II secretion system protein L (398 aa).

The Cytoplasmic portion of the chain corresponds to 1 to 248 (MNNHHTSSAA…RQPTPRRWRP (248 aa)). Residues 249-265 (VIVAALALLLLWSSNCL) form a helical membrane-spanning segment. The Periplasmic portion of the chain corresponds to 266-398 (HDHLMLGQQA…GRLTLEGNDA (133 aa)).

The protein belongs to the GSP L family. As to quaternary structure, type II secretion system is composed of four main components: the outer membrane complex, the inner membrane complex, the cytoplasmic secretion ATPase and the periplasm-spanning pseudopilus. Forms homodimers. Interacts with PulM/GspM. Interacts with PulE/GspE and PulF/GspF.

The protein resides in the cell inner membrane. In terms of biological role, inner membrane component of the type II secretion system required for the energy-dependent secretion of extracellular factors such as proteases and toxins from the periplasm. Plays a role in the complex assembly and recruits PulM resulting in a stable complex in the inner membrane. Provides thus a link between the energy-providing PulE protein in the cytoplasm and the rest of the T2SS machinery. The polypeptide is Type II secretion system protein L (pulL) (Klebsiella pneumoniae).